The primary structure comprises 657 residues: MDKIIIKDLLIQAVIGVNPGERIIKQNIIISVTAYKDLSKCGSSDNVIDTVSYSSLSKSICSYSESSHHYTLEALATGVAKICCLGFGIERVKVLVQKPGAIKLAKWPGVQIERTLDYFKSNSFVEIPSKLINNNKNSNNSNAGNNIVYLAFGSNLGDKFQNILNSFKRLEKQCFIQSTSFMYESSPQYYREQDSFYNCACKVSTDLKPHDLLKFIKQIENDMGRVETFRNGPRVIDIDIIYYNGLIIKTDDLEIPHPLMWERDFVLLPLSDIAPNFIHPTLHITTNRMKLNLPNGGNIHNIPPPPTATTTCNNIIEKVIRIGNLNYNWNDKTFIMGILNVTPDSFVDGGKFNTLEKSIQQATALIEQGADIIDIGGQSTYPGAQQISIEEEINRVVPTIKKIREVLGNDIPLSIDTLHHQVAKEAILAGCNIINDVSGEFRVPIILNHSQPTTQYLQQKQNEQYLNNSNDSNSNSSINTNGEDNNNNNNNNNNNNNNNNNNNNNNNNNDDNDNDNRSKIKQKIDLSSPKIETCTKLGLFRWQIILDPGLGFYKTYEQSIEILQRGKELMGLGFPVLIGPSRKGFIANTIANAEKDKSLPPPSPKSERRLWGTIACCCIGSMWGANIIRIHDIPEIRDAMLISDSVNKPQRRYQIQK.

The interval 1–116 is DHNA; that stretch reads MDKIIIKDLL…WPGVQIERTL (116 aa). Residues 149-274 form an HPPK region; sequence YLAFGSNLGD…FVLLPLSDIA (126 aa). The Pterin-binding domain maps to 333–641; sequence TFIMGILNVT…DIPEIRDAML (309 aa). The tract at residues 335–657 is DHPS; that stretch reads IMGILNVTPD…KPQRRYQIQK (323 aa). Asn-340 contacts Mg(2+). (7,8-dihydropterin-6-yl)methyl diphosphate-binding residues include Thr-380, Asp-416, and Asn-435. The segment at 466-524 is disordered; the sequence is LNNSNDSNSNSSINTNGEDNNNNNNNNNNNNNNNNNNNNNNNNNDDNDNDNRSKIKQKI. The segment covering 467 to 509 has biased composition (low complexity); sequence NNSNDSNSNSSINTNGEDNNNNNNNNNNNNNNNNNNNNNNNNN. The span at 514-524 shows a compositional bias: basic and acidic residues; the sequence is NDNRSKIKQKI. Residues Asp-547, Lys-583, and 629 to 631 contribute to the (7,8-dihydropterin-6-yl)methyl diphosphate site; that span reads RIH.

The protein in the N-terminal section; belongs to the DHNA family. In the central section; belongs to the HPPK family. It in the C-terminal section; belongs to the DHPS family. It depends on Mg(2+) as a cofactor.

The catalysed reaction is 7,8-dihydroneopterin = 6-hydroxymethyl-7,8-dihydropterin + glycolaldehyde. The enzyme catalyses 6-hydroxymethyl-7,8-dihydropterin + ATP = (7,8-dihydropterin-6-yl)methyl diphosphate + AMP + H(+). It catalyses the reaction (7,8-dihydropterin-6-yl)methyl diphosphate + 4-aminobenzoate = 7,8-dihydropteroate + diphosphate. The protein operates within cofactor biosynthesis; tetrahydrofolate biosynthesis; 2-amino-4-hydroxy-6-hydroxymethyl-7,8-dihydropteridine diphosphate from 7,8-dihydroneopterin triphosphate: step 3/4. Its pathway is cofactor biosynthesis; tetrahydrofolate biosynthesis; 2-amino-4-hydroxy-6-hydroxymethyl-7,8-dihydropteridine diphosphate from 7,8-dihydroneopterin triphosphate: step 4/4. It functions in the pathway cofactor biosynthesis; tetrahydrofolate biosynthesis; 7,8-dihydrofolate from 2-amino-4-hydroxy-6-hydroxymethyl-7,8-dihydropteridine diphosphate and 4-aminobenzoate: step 1/2. Catalyzes three sequential steps of tetrahydrofolate biosynthesis. The protein is Folic acid synthesis protein FOL1 (fol1) of Dictyostelium discoideum (Social amoeba).